The chain runs to 390 residues: 4-O-beta-D-mannosyl-D-glucose phosphorylase (390 aa).

It belongs to the glycosyl hydrolase 130 family.

The catalysed reaction is 4-O-beta-D-mannopyranosyl-D-glucopyranose + phosphate = alpha-D-mannose 1-phosphate + D-glucose. Converts 4-O-beta-D-mannopyranosyl-D-glucopyranose (Man-Glc) to mannose 1-phosphate (Man1P) and glucose. Involved in a mannan catabolic pathway which feeds into glycolysis. The sequence is that of 4-O-beta-D-mannosyl-D-glucose phosphorylase from Bacteroides fragilis (strain ATCC 25285 / DSM 2151 / CCUG 4856 / JCM 11019 / LMG 10263 / NCTC 9343 / Onslow / VPI 2553 / EN-2).